The sequence spans 373 residues: Protein-glutamate methylesterase/protein-glutamine glutaminase 1 (373 aa).

The 118-residue stretch at 16–133 (RVVVVDDSAL…ASGLTELSDQ (118 aa)) folds into the Response regulatory domain. A 4-aspartylphosphate modification is found at D67. One can recognise a CheB-type methylesterase domain in the interval 175 to 367 (RVSTEKLICI…PALIAKLSSA (193 aa)). Residues S187, H213, and D309 contribute to the active site.

Belongs to the CheB family. In terms of processing, phosphorylated by CheA. Phosphorylation of the N-terminal regulatory domain activates the methylesterase activity.

The protein localises to the cytoplasm. The enzyme catalyses [protein]-L-glutamate 5-O-methyl ester + H2O = L-glutamyl-[protein] + methanol + H(+). It catalyses the reaction L-glutaminyl-[protein] + H2O = L-glutamyl-[protein] + NH4(+). Involved in chemotaxis. Part of a chemotaxis signal transduction system that modulates chemotaxis in response to various stimuli. Catalyzes the demethylation of specific methylglutamate residues introduced into the chemoreceptors (methyl-accepting chemotaxis proteins or MCP) by CheR. Also mediates the irreversible deamidation of specific glutamine residues to glutamic acid. The chain is Protein-glutamate methylesterase/protein-glutamine glutaminase 1 from Albidiferax ferrireducens (strain ATCC BAA-621 / DSM 15236 / T118) (Rhodoferax ferrireducens).